The sequence spans 78 residues: MGGISIWQLLIIAVIVVLLFGTKKLRGIGSDLGGAIKGFKKAMNEEESEKKDADFEPKSLEQQNKQAATESKKDKEQA.

Residues 1–21 (MGGISIWQLLIIAVIVVLLFG) traverse the membrane as a helical segment. Positions 47-59 (ESEKKDADFEPKS) are enriched in basic and acidic residues. Residues 47–78 (ESEKKDADFEPKSLEQQNKQAATESKKDKEQA) are disordered. The span at 60 to 69 (LEQQNKQAAT) shows a compositional bias: polar residues.

It belongs to the TatA/E family. The Tat system comprises two distinct complexes: a TatABC complex, containing multiple copies of TatA, TatB and TatC subunits, and a separate TatA complex, containing only TatA subunits. Substrates initially bind to the TatABC complex, which probably triggers association of the separate TatA complex to form the active translocon.

It localises to the cell inner membrane. Part of the twin-arginine translocation (Tat) system that transports large folded proteins containing a characteristic twin-arginine motif in their signal peptide across membranes. TatA could form the protein-conducting channel of the Tat system. The sequence is that of Sec-independent protein translocase protein TatA from Vibrio vulnificus (strain YJ016).